We begin with the raw amino-acid sequence, 343 residues long: Probable F-box protein At1g67455 (343 aa).

Residues 1 to 46 (MMISDLPEDMVEEILSRVSIISLGALRWNDLSKARVICKAEARQQF) enclose the F-box domain.

The sequence is that of Probable F-box protein At1g67455 from Arabidopsis thaliana (Mouse-ear cress).